Reading from the N-terminus, the 750-residue chain is Ribosomal RNA large subunit methyltransferase K/L (750 aa).

A THUMP domain is found at 46 to 157; sequence TAYRLCLWSR…RGEAILSLDL (112 aa).

The protein belongs to the methyltransferase superfamily. RlmKL family.

It is found in the cytoplasm. The enzyme catalyses guanosine(2445) in 23S rRNA + S-adenosyl-L-methionine = N(2)-methylguanosine(2445) in 23S rRNA + S-adenosyl-L-homocysteine + H(+). It carries out the reaction guanosine(2069) in 23S rRNA + S-adenosyl-L-methionine = N(2)-methylguanosine(2069) in 23S rRNA + S-adenosyl-L-homocysteine + H(+). Its function is as follows. Specifically methylates the guanine in position 2445 (m2G2445) and the guanine in position 2069 (m7G2069) of 23S rRNA. This Pseudomonas syringae pv. tomato (strain ATCC BAA-871 / DC3000) protein is Ribosomal RNA large subunit methyltransferase K/L.